The following is a 314-amino-acid chain: Glycerol-3-phosphate dehydrogenase [NAD(P)+] (314 aa).

The NADPH site is built by serine 14, phenylalanine 15, arginine 35, and lysine 108. Sn-glycerol 3-phosphate is bound by residues lysine 108 and glycine 136. Alanine 140 contacts NADPH. Sn-glycerol 3-phosphate is bound by residues lysine 191, aspartate 247, serine 257, arginine 258, and asparagine 259. The active-site Proton acceptor is lysine 191. Residue arginine 258 coordinates NADPH. Leucine 282 and glutamate 284 together coordinate NADPH.

Belongs to the NAD-dependent glycerol-3-phosphate dehydrogenase family.

The protein localises to the cytoplasm. The enzyme catalyses sn-glycerol 3-phosphate + NAD(+) = dihydroxyacetone phosphate + NADH + H(+). It catalyses the reaction sn-glycerol 3-phosphate + NADP(+) = dihydroxyacetone phosphate + NADPH + H(+). It participates in membrane lipid metabolism; glycerophospholipid metabolism. Functionally, catalyzes the reduction of the glycolytic intermediate dihydroxyacetone phosphate (DHAP) to sn-glycerol 3-phosphate (G3P), the key precursor for phospholipid synthesis. The sequence is that of Glycerol-3-phosphate dehydrogenase [NAD(P)+] from Rickettsia bellii (strain OSU 85-389).